The sequence spans 736 residues: Phosphoribosylformylglycinamidine synthase subunit PurL (736 aa).

The active site involves histidine 49. ATP-binding residues include tyrosine 52 and lysine 91. A Mg(2+)-binding site is contributed by glutamate 93. Substrate contacts are provided by residues serine 94–histidine 97 and arginine 116. The active-site Proton acceptor is the histidine 95. Mg(2+) is bound at residue aspartate 117. Residue glutamine 240 coordinates substrate. Aspartate 268 contributes to the Mg(2+) binding site. Glutamate 312–glutamine 314 lines the substrate pocket. The ATP site is built by aspartate 493 and glycine 530. A Mg(2+)-binding site is contributed by asparagine 531. Residue serine 533 participates in substrate binding.

This sequence belongs to the FGAMS family. As to quaternary structure, monomer. Part of the FGAM synthase complex composed of 1 PurL, 1 PurQ and 2 PurS subunits.

The protein resides in the cytoplasm. It catalyses the reaction N(2)-formyl-N(1)-(5-phospho-beta-D-ribosyl)glycinamide + L-glutamine + ATP + H2O = 2-formamido-N(1)-(5-O-phospho-beta-D-ribosyl)acetamidine + L-glutamate + ADP + phosphate + H(+). It participates in purine metabolism; IMP biosynthesis via de novo pathway; 5-amino-1-(5-phospho-D-ribosyl)imidazole from N(2)-formyl-N(1)-(5-phospho-D-ribosyl)glycinamide: step 1/2. In terms of biological role, part of the phosphoribosylformylglycinamidine synthase complex involved in the purines biosynthetic pathway. Catalyzes the ATP-dependent conversion of formylglycinamide ribonucleotide (FGAR) and glutamine to yield formylglycinamidine ribonucleotide (FGAM) and glutamate. The FGAM synthase complex is composed of three subunits. PurQ produces an ammonia molecule by converting glutamine to glutamate. PurL transfers the ammonia molecule to FGAR to form FGAM in an ATP-dependent manner. PurS interacts with PurQ and PurL and is thought to assist in the transfer of the ammonia molecule from PurQ to PurL. The protein is Phosphoribosylformylglycinamidine synthase subunit PurL of Rhodopseudomonas palustris (strain ATCC BAA-98 / CGA009).